A 120-amino-acid polypeptide reads, in one-letter code: Small ribosomal subunit protein bS16 (120 aa).

Residues 81 to 120 are disordered; it reads GLAKRPARNNPQKAEPGEKAKERAAKRAEKAAAPAEDAAA. A compositionally biased stretch (basic and acidic residues) spans 95–110; the sequence is EPGEKAKERAAKRAEK. Positions 111-120 are enriched in low complexity; it reads AAAPAEDAAA.

The protein belongs to the bacterial ribosomal protein bS16 family.

The sequence is that of Small ribosomal subunit protein bS16 from Methylobacterium radiotolerans (strain ATCC 27329 / DSM 1819 / JCM 2831 / NBRC 15690 / NCIMB 10815 / 0-1).